The following is a 448-amino-acid chain: Adenylosuccinate synthetase (448 aa).

GTP contacts are provided by residues 36–42 and 64–66; these read GDEGKGK and GHT. The active-site Proton acceptor is Asp37. 2 residues coordinate Mg(2+): Asp37 and Gly64. IMP-binding positions include 37–40, 62–65, Thr154, Arg168, Asn246, Thr261, and Arg325; these read DEGK and NAGH. Catalysis depends on His65, which acts as the Proton donor. 321 to 327 serves as a coordination point for substrate; it reads VTTKRKR. GTP is bound by residues Arg327, 353–355, and 436–438; these read KLD and GVG.

The protein belongs to the adenylosuccinate synthetase family. As to quaternary structure, homodimer. It depends on Mg(2+) as a cofactor.

Its subcellular location is the cytoplasm. The catalysed reaction is IMP + L-aspartate + GTP = N(6)-(1,2-dicarboxyethyl)-AMP + GDP + phosphate + 2 H(+). The protein operates within purine metabolism; AMP biosynthesis via de novo pathway; AMP from IMP: step 1/2. Its function is as follows. Plays an important role in the de novo pathway and in the salvage pathway of purine nucleotide biosynthesis. Catalyzes the first committed step in the biosynthesis of AMP from IMP. The sequence is that of Adenylosuccinate synthetase from Drosophila persimilis (Fruit fly).